Here is a 275-residue protein sequence, read N- to C-terminus: 3-methyl-2-oxobutanoate hydroxymethyltransferase (275 aa).

Residues D44 and D83 each contribute to the Mg(2+) site. 3-methyl-2-oxobutanoate is bound by residues 44–45, D83, and K113; that span reads DS. E115 serves as a coordination point for Mg(2+). E182 serves as the catalytic Proton acceptor.

This sequence belongs to the PanB family. As to quaternary structure, homodecamer; pentamer of dimers. Requires Mg(2+) as cofactor.

The protein localises to the cytoplasm. The enzyme catalyses 3-methyl-2-oxobutanoate + (6R)-5,10-methylene-5,6,7,8-tetrahydrofolate + H2O = 2-dehydropantoate + (6S)-5,6,7,8-tetrahydrofolate. Its pathway is cofactor biosynthesis; (R)-pantothenate biosynthesis; (R)-pantoate from 3-methyl-2-oxobutanoate: step 1/2. In terms of biological role, catalyzes the reversible reaction in which hydroxymethyl group from 5,10-methylenetetrahydrofolate is transferred onto alpha-ketoisovalerate to form ketopantoate. This chain is 3-methyl-2-oxobutanoate hydroxymethyltransferase, found in Clostridium novyi (strain NT).